The following is a 548-amino-acid chain: mRNA cleavage and polyadenylation factor CLP1 (548 aa).

Residues Glu19, Lys60, and 123–128 (SSGKTT) each bind ATP. Over residues 437 to 481 (ESEVKEEVKEEKNEKDGEIKQDGEGEKKGEGKGEGEGEGEGKYGE) the composition is skewed to basic and acidic residues. The tract at residues 437 to 500 (ESEVKEEVKE…DEEEVPFREE (64 aa)) is disordered. Acidic residues predominate over residues 482–494 (EEGEAEGEDDEEE).

Belongs to the Clp1 family. Clp1 subfamily. Component of a pre-mRNA cleavage factor complex. Interacts directly with PCF11.

It is found in the nucleus. In terms of biological role, required for endonucleolytic cleavage during polyadenylation-dependent pre-mRNA 3'-end formation. In Cryptococcus neoformans var. neoformans serotype D (strain B-3501A) (Filobasidiella neoformans), this protein is mRNA cleavage and polyadenylation factor CLP1.